A 160-amino-acid polypeptide reads, in one-letter code: Nucleotide-binding protein AHA_1129 (160 aa).

It belongs to the YajQ family.

Its function is as follows. Nucleotide-binding protein. This chain is Nucleotide-binding protein AHA_1129, found in Aeromonas hydrophila subsp. hydrophila (strain ATCC 7966 / DSM 30187 / BCRC 13018 / CCUG 14551 / JCM 1027 / KCTC 2358 / NCIMB 9240 / NCTC 8049).